We begin with the raw amino-acid sequence, 152 residues long: Endoribonuclease YbeY (152 aa).

Histidine 118, histidine 122, and histidine 128 together coordinate Zn(2+).

Belongs to the endoribonuclease YbeY family. The cofactor is Zn(2+).

The protein resides in the cytoplasm. In terms of biological role, single strand-specific metallo-endoribonuclease involved in late-stage 70S ribosome quality control and in maturation of the 3' terminus of the 16S rRNA. The polypeptide is Endoribonuclease YbeY (Lacticaseibacillus casei (strain BL23) (Lactobacillus casei)).